The sequence spans 273 residues: Exosome complex component Rrp42 (273 aa).

It belongs to the RNase PH family. Rrp42 subfamily. As to quaternary structure, component of the archaeal exosome complex. Forms a hexameric ring-like arrangement composed of 3 Rrp41-Rrp42 heterodimers. The hexameric ring associates with a trimer of Rrp4 and/or Csl4 subunits.

Its subcellular location is the cytoplasm. In terms of biological role, non-catalytic component of the exosome, which is a complex involved in RNA degradation. Contributes to the structuring of the Rrp41 active site. The sequence is that of Exosome complex component Rrp42 from Thermococcus gammatolerans (strain DSM 15229 / JCM 11827 / EJ3).